Reading from the N-terminus, the 350-residue chain is Probable deoxyhypusine synthase (350 aa).

NAD(+)-binding positions include 96 to 100 (SNLIS), 122 to 124 (TAG), glutamate 128, and aspartate 229. 127–128 (EE) is a binding site for spermidine. A spermidine-binding site is contributed by aspartate 234. Glycine 276 contacts NAD(+). Residue histidine 281 participates in spermidine binding. 301 to 302 (SA) lines the NAD(+) pocket. Spermidine is bound by residues 307–309 (GSD) and 316–322 (EAVSWGK). The active-site Nucleophile is the lysine 322. 335–336 (EV) provides a ligand contact to NAD(+).

Belongs to the deoxyhypusine synthase family. NAD(+) serves as cofactor.

It catalyses the reaction [eIF5A protein]-L-lysine + spermidine = [eIF5A protein]-deoxyhypusine + propane-1,3-diamine. Its pathway is protein modification; eIF5A hypusination. Its function is as follows. Catalyzes the NAD-dependent oxidative cleavage of spermidine and the subsequent transfer of the butylamine moiety of spermidine to the epsilon-amino group of a specific lysine residue of the eIF-5A precursor protein to form the intermediate deoxyhypusine residue. The polypeptide is Probable deoxyhypusine synthase (Schizosaccharomyces pombe (strain 972 / ATCC 24843) (Fission yeast)).